The sequence spans 208 residues: NAD(P)H-quinone oxidoreductase subunit I (208 aa).

4Fe-4S ferredoxin-type domains follow at residues glycine 55–valine 84 and arginine 95–glutamate 124. [4Fe-4S] cluster contacts are provided by cysteine 64, cysteine 67, cysteine 70, cysteine 74, cysteine 104, cysteine 107, cysteine 110, and cysteine 114.

This sequence belongs to the complex I 23 kDa subunit family. NDH-1 is composed of at least 11 different subunits. Requires [4Fe-4S] cluster as cofactor.

It is found in the cellular thylakoid membrane. The enzyme catalyses a plastoquinone + NADH + (n+1) H(+)(in) = a plastoquinol + NAD(+) + n H(+)(out). It carries out the reaction a plastoquinone + NADPH + (n+1) H(+)(in) = a plastoquinol + NADP(+) + n H(+)(out). Its function is as follows. NDH-1 shuttles electrons from an unknown electron donor, via FMN and iron-sulfur (Fe-S) centers, to quinones in the respiratory and/or the photosynthetic chain. The immediate electron acceptor for the enzyme in this species is believed to be plastoquinone. Couples the redox reaction to proton translocation, and thus conserves the redox energy in a proton gradient. This Prochlorococcus marinus subsp. pastoris (strain CCMP1986 / NIES-2087 / MED4) protein is NAD(P)H-quinone oxidoreductase subunit I.